A 514-amino-acid polypeptide reads, in one-letter code: Sugar transport protein 3 (514 aa).

Residues 1–19 (MVAEEARKEAMAKSVSGGK) are Cytoplasmic-facing. Transmembrane regions (helical) follow at residues 20-40 (ITYFVVASCVMAAMGGVIFGY), 87-107 (LLTSFTSSLYVSGLIATLLAS), 124-144 (VSFLAGAALGGSAQNVAMLII), 147-167 (LLLGVGVGFANQSVPLYLSEM), 174-194 (GAISNGFQLCIGIGFLSANVI), 207-227 (ISLATAAIPASILTLGSLFLP), 289-309 (LVMALVIPFFQQVTGINVVAF), 327-347 (MSTLVTGIVGTSSTLLSMLVV), 356-376 (FLIGGLQMLVSQVTIGVIVMV), 392-412 (VVVLVCVYVAGFGWSWGPLGW), 430-450 (VTVAVSFVFTFAVAQSAPPML), and 456-476 (GIFFFYGGWLVVMTVAVQLFL). The Cytoplasmic segment spans residues 477–514 (PETKNVPIEKVVGLWEKHWFWRRMTSKRDIQETTILSH).

It belongs to the major facilitator superfamily. Sugar transporter (TC 2.A.1.1) family.

The protein resides in the membrane. In terms of biological role, mediates an active uptake of hexoses, probably by sugar/hydrogen symport. The polypeptide is Sugar transport protein 3 (STP3) (Arabidopsis thaliana (Mouse-ear cress)).